The primary structure comprises 351 residues: Glycerol-3-phosphate dehydrogenase [NAD(P)+] (351 aa).

Positions 18, 19, 38, and 122 each coordinate NADPH. Sn-glycerol 3-phosphate-binding residues include lysine 122, glycine 153, and serine 155. Residue alanine 157 participates in NADPH binding. Sn-glycerol 3-phosphate contacts are provided by lysine 208, aspartate 261, serine 271, arginine 272, and asparagine 273. Lysine 208 acts as the Proton acceptor in catalysis. Residue arginine 272 coordinates NADPH. Glutamate 297 is a binding site for NADPH.

Belongs to the NAD-dependent glycerol-3-phosphate dehydrogenase family.

The protein localises to the cytoplasm. It catalyses the reaction sn-glycerol 3-phosphate + NAD(+) = dihydroxyacetone phosphate + NADH + H(+). It carries out the reaction sn-glycerol 3-phosphate + NADP(+) = dihydroxyacetone phosphate + NADPH + H(+). It participates in membrane lipid metabolism; glycerophospholipid metabolism. Its function is as follows. Catalyzes the reduction of the glycolytic intermediate dihydroxyacetone phosphate (DHAP) to sn-glycerol 3-phosphate (G3P), the key precursor for phospholipid synthesis. The chain is Glycerol-3-phosphate dehydrogenase [NAD(P)+] from Bordetella pertussis (strain Tohama I / ATCC BAA-589 / NCTC 13251).